The primary structure comprises 98 residues: uncharacterized protein (98 aa).

This is an uncharacterized protein from Methanocaldococcus jannaschii (strain ATCC 43067 / DSM 2661 / JAL-1 / JCM 10045 / NBRC 100440) (Methanococcus jannaschii).